Consider the following 186-residue polypeptide: Temperature-induced lipocalin-1 (186 aa).

Positions 90–97 (PPFLPIIP) match the HPR (Hydrophobic proline-rich) motif. Residues 154–174 (KLHKTPQSDTPPESNTAPEDS) form a disordered region. Polar residues predominate over residues 158 to 171 (TPQSDTPPESNTAP).

This sequence belongs to the calycin superfamily. Lipocalin family. As to expression, expressed ubiquitously at similar levels, except in dry seeds (at protein level). Present in seeds.

It localises to the cell membrane. It is found in the cytoplasm. The protein resides in the plastid. Its subcellular location is the chloroplast membrane. In terms of biological role, involved in basal (BT) and acquired thermotolerance (AT), probably by preventing plasma membrane lipids peroxidation induced by severe heat-shock (HS). Lipocalin that confers protection against oxidative stress caused by heat, freezing, paraquat and light. Confers resistance to high salt (NaCl) levels, probably by protecting chloroplasts from ion toxicity via ion homeostasis maintenance. Required for seed longevity by ensuring polyunsaturated lipids integrity. The chain is Temperature-induced lipocalin-1 from Arabidopsis thaliana (Mouse-ear cress).